An 82-amino-acid polypeptide reads, in one-letter code: Spore coat protein T (82 aa).

Positions 1–19 (MDYPLNEQSFEQITPYDER) are excised as a propeptide.

Its subcellular location is the spore coat. In terms of biological role, inner spore coat protein which seems to play a role in germination. The polypeptide is Spore coat protein T (cotT) (Bacillus subtilis (strain 168)).